A 550-amino-acid polypeptide reads, in one-letter code: CTP synthase (550 aa).

Positions 1–270 (MTKFVFVTGG…DRLICEELRL (270 aa)) are amidoligase domain. CTP is bound at residue S13. S13 contacts UTP. ATP-binding positions include 14–19 (SLGKGI) and D71. Mg(2+)-binding residues include D71 and E144. Residues 151–153 (DIE), 191–196 (KTKPTQ), and K227 contribute to the CTP site. UTP contacts are provided by residues 191-196 (KTKPTQ) and K227. One can recognise a Glutamine amidotransferase type-1 domain in the interval 295-547 (TIGMVGKYVD…VEAALAGQQR (253 aa)). L-glutamine is bound at residue G356. Catalysis depends on C383, which acts as the Nucleophile; for glutamine hydrolysis. Residues 384–387 (LGMQ), E407, and R473 contribute to the L-glutamine site. Active-site residues include H520 and E522.

Belongs to the CTP synthase family. In terms of assembly, homotetramer.

The enzyme catalyses UTP + L-glutamine + ATP + H2O = CTP + L-glutamate + ADP + phosphate + 2 H(+). The catalysed reaction is L-glutamine + H2O = L-glutamate + NH4(+). It carries out the reaction UTP + NH4(+) + ATP = CTP + ADP + phosphate + 2 H(+). The protein operates within pyrimidine metabolism; CTP biosynthesis via de novo pathway; CTP from UDP: step 2/2. With respect to regulation, allosterically activated by GTP, when glutamine is the substrate; GTP has no effect on the reaction when ammonia is the substrate. The allosteric effector GTP functions by stabilizing the protein conformation that binds the tetrahedral intermediate(s) formed during glutamine hydrolysis. Inhibited by the product CTP, via allosteric rather than competitive inhibition. In terms of biological role, catalyzes the ATP-dependent amination of UTP to CTP with either L-glutamine or ammonia as the source of nitrogen. Regulates intracellular CTP levels through interactions with the four ribonucleotide triphosphates. In Cupriavidus pinatubonensis (strain JMP 134 / LMG 1197) (Cupriavidus necator (strain JMP 134)), this protein is CTP synthase.